The chain runs to 265 residues: Vegetative storage protein 2 (265 aa).

The first 18 residues, 1–18 (MKILSLSLLLLLAATVSA), serve as a signal peptide directing secretion. N-linked (GlcNAc...) asparagine glycans are attached at residues asparagine 110, asparagine 188, and asparagine 210.

Belongs to the APS1/VSP family. Highly expressed in flowers, but also found in leaves, vegetative shoots, petioles, peduncles, and receptacles of floral organs.

Functionally, may function as somatic storage protein during early seedling development. The protein is Vegetative storage protein 2 (VSP2) of Arabidopsis thaliana (Mouse-ear cress).